Here is a 1782-residue protein sequence, read N- to C-terminus: AF4/FMR2 family member lilli (1782 aa).

Disordered regions lie at residues 42–84 (NMED…PSEG), 150–313 (ASSS…PPPE), 434–515 (MPTP…QQQQ), 605–637 (GGSSGSCMGTMSSSSSSNKTPSPTDSNRWNLSR), 691–732 (EKLH…QQRY), 768–820 (GALP…LQIP), 839–891 (KVQP…SNKK), 911–1064 (VAAA…AAAS), 1091–1126 (AGNSSSSSKAKRRYSVGSSSNSSSSSETEEQQQHKQ), 1166–1234 (LPQS…KQGQ), 1296–1327 (ARQHHHQPERLKAQQNGHLSSRSAEGARTPKD), 1386–1420 (LKQELPARRRKRSSSSSSSPYKEKKRKKEKAEQLS), 1450–1484 (QESAANGSPNKLQQQQQQSRLSQSQQQQQQQQQQQ), and 1674–1701 (GNTPSSISPSNSVGSQGSGSNTPPGKIV). Basic and acidic residues predominate over residues 54-80 (REKYERQQGIQSDDRETSLFGEPRRLN). Composition is skewed to low complexity over residues 164–180 (QQQQQQQQQQQHYQQQQ) and 211–260 (PSSS…MSSP). Pro residues predominate over residues 435-447 (PTPPKASPTPPAI). Thr443 carries the post-translational modification Phosphothreonine. Residues 450–463 (MKTEKNHSLEKQDS) are compositionally biased toward basic and acidic residues. Acidic residues predominate over residues 465–475 (LENDLELSESD). Phosphoserine occurs at positions 472 and 474. Composition is skewed to low complexity over residues 484 to 515 (SAGNSSNSSESDSSESGSEASSKGDTQQQQQQ) and 609 to 622 (GSCMGTMSSSSSSN). Polar residues predominate over residues 623-634 (KTPSPTDSNRWN). Residues 691–701 (EKLHDEPRHVG) are compositionally biased toward basic and acidic residues. 2 stretches are compositionally biased toward low complexity: residues 714-730 (QQQQQQQQQQQQQQQQQ) and 782-805 (SDSGSASSGSGSGSSSSDSAGGSS). A compositionally biased stretch (basic residues) spans 859 to 869 (PRQKKPRKKKM). 2 positions are modified to phosphoserine: Ser878 and Ser879. The segment at residues 920 to 932 (KKGRGRPRKQAQQ) is a DNA-binding region (a.T hook). Residues 929–972 (QAQQQQQQQQQQLQQSGNLSSASASSSQAKGPTLTAAKKPLAKA) are compositionally biased toward low complexity. Phosphoserine occurs at positions 949 and 951. The span at 973 to 982 (SVSNSNSTAP) shows a compositional bias: polar residues. 4 stretches are compositionally biased toward low complexity: residues 996–1018 (SNSSSNSNTPTKKPTATFATMAA), 1033–1064 (SSSSSCSSTKSSSSSGSDSETPAAAAAGAAAS), 1105–1116 (SVGSSSNSSSSS), and 1174–1196 (SSSDCSSSSNSDSSSNSSGSSSS). A compositionally biased stretch (polar residues) spans 1308 to 1318 (AQQNGHLSSRS). Polar residues predominate over residues 1450-1460 (QESAANGSPNK). Ser1457 is modified (phosphoserine). Low complexity-rich tracts occupy residues 1461–1484 (LQQQQQQSRLSQSQQQQQQQQQQQ) and 1674–1694 (GNTPSSISPSNSVGSQGSGSN).

It belongs to the AF4 family.

The protein resides in the nucleus. Functionally, has a role in transcriptional regulation. Acts in parallel with the Ras/MAPK and the PI3K/PKB pathways in the control of cell identity and cellular growth. Essential for regulation of the cytoskeleton and cell growth but not for cell proliferation or growth rate. Required specifically for the microtubule-based basal transport of lipid droplets. Plays a partially redundant function downstream of Raf in cell fate specification in the developing eye. Pair-rule protein that regulates embryonic cellularization, gastrulation and segmentation. This Drosophila mojavensis (Fruit fly) protein is AF4/FMR2 family member lilli.